We begin with the raw amino-acid sequence, 123 residues long: MPTVNQLIRKPRQAQVKRNKVPALQENPQKRGVCTRVYTTTPRKPNSALRKVAKIRLTNGFEVIGYIPGEGHNLQEHSVVMIRGGRVKDLPGVRYHIIRGVLDTQGVKNRKQRRSKYGAKRPK.

Position 89 is a 3-methylthioaspartic acid (D89).

Belongs to the universal ribosomal protein uS12 family. As to quaternary structure, part of the 30S ribosomal subunit. Contacts proteins S8 and S17. May interact with IF1 in the 30S initiation complex.

Functionally, with S4 and S5 plays an important role in translational accuracy. Interacts with and stabilizes bases of the 16S rRNA that are involved in tRNA selection in the A site and with the mRNA backbone. Located at the interface of the 30S and 50S subunits, it traverses the body of the 30S subunit contacting proteins on the other side and probably holding the rRNA structure together. The combined cluster of proteins S8, S12 and S17 appears to hold together the shoulder and platform of the 30S subunit. This is Small ribosomal subunit protein uS12 from Rhizobium meliloti (strain 1021) (Ensifer meliloti).